The primary structure comprises 279 residues: MAMLSFEKKYRVRGGTLVGGDLFDFWVGPFYVGFFGVTTLFFSVLGTALIIWGASQGPTWNLWQISIAPPDLKYGLGVAPLMEGGLWQIITVCAIGAFVSWALREVEICRKLGMQYHVPIAFSFAILAYVTLVVIRPILMGAWGHGFPYGIFSHLDWVSNVGYQYLHFHYNPAHMLAITFFFTTTLAMSMHGGLILSAANPKKGEPMKTTDHEDTFFRDAVGYSIGSLGIHRLGLFLALSAAFWSAVCIVISGPFWTRGWPEWWGWWLNLPIWSQWPLN.

3 helical membrane-spanning segments follow: residues 33-56 (GFFG…GASQ), 85-113 (GLWQ…RKLG), and 116-141 (YHVP…ILMG). 2 residues coordinate (7R,8Z)-bacteriochlorophyll b: histidine 154 and histidine 174. A helical transmembrane segment spans residues 171 to 200 (NPAHMLAITFFFTTTLAMSMHGGLILSAAN). Histidine 191 is a binding site for Fe cation. Phenylalanine 217 is an a ubiquinone binding site. Residues 226-252 (GSLGIHRLGLFLALSAAFWSAVCIVIS) traverse the membrane as a helical segment. Residue histidine 231 coordinates Fe cation.

It belongs to the reaction center PufL/M/PsbA/D family. In terms of assembly, reaction center is composed of four bacteriochlorophylls, two bacteriopheophytins, two ubiquinones, one iron, and three highly hydrophobic polypeptide chains (designated L, M, and H).

The protein resides in the cell inner membrane. The reaction center is a membrane-bound complex that mediates the initial photochemical event in the electron transfer process of photosynthesis. The chain is Reaction center protein L chain (pufL) from Rubrivivax gelatinosus (Rhodocyclus gelatinosus).